The following is a 137-amino-acid chain: Phosphoribosyl-AMP cyclohydrolase (137 aa).

D84 contacts Mg(2+). C85 contributes to the Zn(2+) binding site. The Mg(2+) site is built by D86 and D88. Positions 101 and 108 each coordinate Zn(2+).

This sequence belongs to the PRA-CH family. In terms of assembly, homodimer. It depends on Mg(2+) as a cofactor. The cofactor is Zn(2+).

It is found in the cytoplasm. It carries out the reaction 1-(5-phospho-beta-D-ribosyl)-5'-AMP + H2O = 1-(5-phospho-beta-D-ribosyl)-5-[(5-phospho-beta-D-ribosylamino)methylideneamino]imidazole-4-carboxamide. Its pathway is amino-acid biosynthesis; L-histidine biosynthesis; L-histidine from 5-phospho-alpha-D-ribose 1-diphosphate: step 3/9. Functionally, catalyzes the hydrolysis of the adenine ring of phosphoribosyl-AMP. The polypeptide is Phosphoribosyl-AMP cyclohydrolase (Prosthecochloris aestuarii (strain DSM 271 / SK 413)).